Here is a 213-residue protein sequence, read N- to C-terminus: MLDQQLLIGTVFLAGLASFLSPCIFPIIPIYFGILSKGGKKVLNTFLFILGLSLTFVSLGFSFGFLGNILFSNTTRIIAGVIVIILGIHQLGIFKIGLLERTKLVEIKTSGKSTALEAFVLGLTFSLGWTPCIGPILASVLALSGDEGSALYGASMMFVYVLGLATPFVLFSFFSDSLLKRAKGLNKHLDKFKIGGGILIIVMGILLITNNFS.

Helical transmembrane passes span 15-35, 46-66, 77-97, 118-138, 154-174, and 192-212; these read GLAS…FGIL, FLFI…FGFL, IIAG…FKIG, AFVL…PILA, ASMM…FSFF, and FKIG…TNNF.

It belongs to the DsbD family.

Its subcellular location is the cell membrane. Could be involved in cytochrome c synthesis. The protein is Putative cytochrome c-type biogenesis protein HI_1454 of Haemophilus influenzae (strain ATCC 51907 / DSM 11121 / KW20 / Rd).